An 887-amino-acid chain; its full sequence is Alanine--tRNA ligase (887 aa).

4 residues coordinate Zn(2+): H581, H585, C683, and H687.

The protein belongs to the class-II aminoacyl-tRNA synthetase family. The cofactor is Zn(2+).

The protein resides in the cytoplasm. It carries out the reaction tRNA(Ala) + L-alanine + ATP = L-alanyl-tRNA(Ala) + AMP + diphosphate. Functionally, catalyzes the attachment of alanine to tRNA(Ala) in a two-step reaction: alanine is first activated by ATP to form Ala-AMP and then transferred to the acceptor end of tRNA(Ala). Also edits incorrectly charged Ser-tRNA(Ala) and Gly-tRNA(Ala) via its editing domain. This chain is Alanine--tRNA ligase, found in Ehrlichia ruminantium (strain Gardel).